A 42-amino-acid chain; its full sequence is uncharacterized protein (42 aa).

This is an uncharacterized protein from Saccharomyces cerevisiae (strain ATCC 204508 / S288c) (Baker's yeast).